Here is a 538-residue protein sequence, read N- to C-terminus: Lipid scramblase CLPTM1L (538 aa).

Over 1-10 (MWSGRSSFTS) the chain is Cytoplasmic. The chain crosses the membrane as a helical span at residues 11-31 (LVVGVFVVYVVHTCWVMYGIV). The Extracellular portion of the chain corresponds to 32–284 (YTRPCSGHGR…VKGIFVDTNL (253 aa)). N-linked (GlcNAc...) asparagine glycosylation is found at N91 and N101. A helical membrane pass occupies residues 285–305 (YFLALTFFVAAFHLLFDFLAF). At 306–324 (KNDISFWKKKKSMIGMSTK) the chain is on the cytoplasmic side. The chain crosses the membrane as a helical span at residues 325–341 (AVLWRCFSTVVIFLFLL). Residues 342–402 (DEQTSLPVLV…TEEYDAQAMK (61 aa)) lie on the Extracellular side of the membrane. Residues 403 to 423 (YLSYLLYPLCIGGAIYSLLNI) traverse the membrane as a helical segment. Residues 424–428 (KYKSW) are Cytoplasmic-facing. A helical transmembrane segment spans residues 429-449 (YSWLINSFVNGVYAFGFLFML). Over 450–538 (PQLFVNYKMK…DTPQRKPHTD (89 aa)) the chain is Extracellular.

It belongs to the CLPTM1 family.

It is found in the endoplasmic reticulum membrane. It carries out the reaction a 6-(alpha-D-glucosaminyl)-1-(1,2-diacyl-sn-glycero-3-phospho)-1D-myo-inositol(in) = a 6-(alpha-D-glucosaminyl)-1-(1,2-diacyl-sn-glycero-3-phospho)-1D-myo-inositol(out). The enzyme catalyses 6-(alpha-D-glucosaminyl)-(1-octadecanoyl,2-(9Z)-octadecenoyl-sn-glycero-3-phospho)-1D-myo-inositol(in) = 6-(alpha-D-glucosaminyl)-(1-octadecanoyl,2-(9Z)-octadecenoyl-sn-glycero-3-phospho)-1D-myo-inositol(out). The catalysed reaction is a 1,2-diacyl-sn-glycero-3-phospho-(1D-myo-inositol)(in) = a 1,2-diacyl-sn-glycero-3-phospho-(1D-myo-inositol)(out). It catalyses the reaction a 1,2-diacyl-sn-glycero-3-phosphocholine(in) = a 1,2-diacyl-sn-glycero-3-phosphocholine(out). It carries out the reaction a 1,2-diacyl-sn-glycero-3-phosphoethanolamine(in) = a 1,2-diacyl-sn-glycero-3-phosphoethanolamine(out). Scramblase that mediates the translocation of glucosaminylphosphatidylinositol (alpha-D-GlcN-(1-6)-(1,2-diacyl-sn-glycero-3-phospho)-1D-myo-inositol, GlcN-PI) across the endoplasmic reticulum (ER) membrane, from the cytosolic leaflet to the luminal leaflet of the ER membrane, where it participates in the biosynthesis of glycosylphosphatidylinositol (GPI). GPI is a lipid glycoconjugate involved in post-translational modification of proteins. Can also translocate 1,2-diacyl-sn-glycero-3-phospho-(1D-myo-inositol) (phosphatidylinositol or PI), as well as several other phospholipids (1,2-diacyl-sn-glycero-3-phosphocholine, 1,2-diacyl-sn-glycero-3-phosphoethanolamine), and N-acetylglucosaminylphosphatidylinositol (GlcNAc-PI) in vitro. The polypeptide is Lipid scramblase CLPTM1L (CLPTM1L) (Bos taurus (Bovine)).